We begin with the raw amino-acid sequence, 444 residues long: MAKKRDRIVNTQPFISDDASVASSRKRSKVPKTHQKQEKLIEAGMSEKIMKQALAQQKEVADEENAERNPSSAAFAVAGAATAGEEQKILEEEEDDIDDFDGTFENQSQFDKQEEINEDDEKLFESFLNKNAPPQRTLTDIIIKKLKDKDADLAEEERPDPKMDPAITKLYKGVGKFMSEYTVGKLPKAFKLVTSMEHWEDVLYLTEPEKWSPNALYQATRIFASNLKDRQVQRFYNYVLLPRVREDIRKHKKLHFALYQALKKSLYKPSAFNQGILFPLCKSGTCNLREAVIIGSILEKCSIPMLHSCVALNRLAEMDYCGTTSYFIKVLLEKKYCMPYRVLDALVAHFMRFVDDIRVMPVIWHQSLLTFVQRYKYEILKEDKEHLQTLLQRQKHHLVTPEILRELKDSRNRGEKEDPMVDNFAPVPAKEDRFDIPEVPMEED.

Disordered stretches follow at residues 1-37 (MAKKRDRIVNTQPFISDDASVASSRKRSKVPKTHQKQ) and 53-85 (ALAQQKEVADEENAERNPSSAAFAVAGAATAGE). The span at 24 to 34 (SRKRSKVPKTH) shows a compositional bias: basic residues. Residues 73-84 (AAFAVAGAATAG) show a composition bias toward low complexity.

The protein belongs to the bystin family. In terms of assembly, component of the 40S pre-ribosome. As to expression, highly expressed in flowers and at lower levels in roots, hypocotyls, stems, leaves, siliques and seeds.

The protein resides in the nucleus. It is found in the nucleolus. The protein localises to the nucleoplasm. Essential protein required during embryogenesis and pollen development. Required for processing of 20S pre-rRNA precursor and biogenesis of 40S ribosomal subunits. The polypeptide is Bystin (Arabidopsis thaliana (Mouse-ear cress)).